Reading from the N-terminus, the 387-residue chain is Anhydro-N-acetylmuramic acid kinase (387 aa).

9-16 (GTSADGVD) is a binding site for ATP.

The protein belongs to the anhydro-N-acetylmuramic acid kinase family.

The enzyme catalyses 1,6-anhydro-N-acetyl-beta-muramate + ATP + H2O = N-acetyl-D-muramate 6-phosphate + ADP + H(+). It functions in the pathway amino-sugar metabolism; 1,6-anhydro-N-acetylmuramate degradation. The protein operates within cell wall biogenesis; peptidoglycan recycling. Functionally, catalyzes the specific phosphorylation of 1,6-anhydro-N-acetylmuramic acid (anhMurNAc) with the simultaneous cleavage of the 1,6-anhydro ring, generating MurNAc-6-P. Is required for the utilization of anhMurNAc either imported from the medium or derived from its own cell wall murein, and thus plays a role in cell wall recycling. This Synechococcus sp. (strain WH7803) protein is Anhydro-N-acetylmuramic acid kinase.